The chain runs to 313 residues: Olfactory receptor 4E2 (313 aa).

Residues 1-25 lie on the Extracellular side of the membrane; sequence MDSLNQTRVTEFVFLGLTDNRVLEM. Residue Asn5 is glycosylated (N-linked (GlcNAc...) asparagine). The chain crosses the membrane as a helical span at residues 26–49; sequence LFFMAFSAIYMLTLSGNILIIIAT. Topologically, residues 50–57 are cytoplasmic; that stretch reads VFTPSLHT. A helical membrane pass occupies residues 58 to 79; sequence PMYFFLSNLSFIDICHSSVTVP. Over 80-100 the chain is Extracellular; that stretch reads KMLEGLLLERKTISFDNCITQ. Cysteines 97 and 179 form a disulfide. A helical transmembrane segment spans residues 101-120; it reads LFFLHLFACAEIFLLIIVAY. Cu cation is bound by residues His105 and Cys109. Topologically, residues 121–139 are cytoplasmic; the sequence is DRYVAICTPLHYPNVMNMR. A helical transmembrane segment spans residues 140–158; that stretch reads VCIQLVFALWLGGTVHSLG. Over 159–195 the chain is Extracellular; sequence QTFLTIRLPYCGPNIIDSYFCDVPLVIKLACTDTYLT. The helical transmembrane segment at 196–219 threads the bilayer; that stretch reads GILIVTNSGTISLSCFLAVVTSYM. The Cytoplasmic segment spans residues 220-235; the sequence is VILVSLRKHSAEGRQK. The chain crosses the membrane as a helical span at residues 236–258; the sequence is ALSTCSAHFMVVALFFGPCIFIY. Residues 259 to 269 are Extracellular-facing; the sequence is TRPDTSFSIDK. Arg260 provides a ligand contact to Cu cation. Residues 270–289 traverse the membrane as a helical segment; it reads VVSVFYTVVTPLLNPFIYTL. The Cytoplasmic segment spans residues 290–313; it reads RNEEVKSAMKQLRQRQVFFTKSYT.

This sequence belongs to the G-protein coupled receptor 1 family.

Its subcellular location is the cell membrane. With respect to regulation, copper binding enhances receptor activity in response to odorant binding. Its function is as follows. Olfactory receptor that is activated by the binding of organosulfur odorants with thioether groups such as (methylthio)methanethiol (MTMT) and bis(methylthiomethyl) disulfide. Also binds odorants cis-cyclooctene and tert-butyl mercaptan. The activity of this receptor is mediated by G proteins which activate adenylyl cyclase. The protein is Olfactory receptor 4E2 of Homo sapiens (Human).